The sequence spans 314 residues: MALVAGSAAYQVLRGVTGTFPTQSATLLARAPALCARTLNRRRMSSRRQTDHLERTANTFRQEIISPAKVCEITNESATVKRVRLAIANREFTFKAGQWVDFFIPGVPKVGGFSICSCPGLLETEGVLELAVKYNLHPPAHWIHSQCTLGSEVAVRVGGEFCFDPQPSDLPLDLVLIAGGVGINPLFSILLHVADLHKTHEMTGRGFQMGNVKLYYCAKNTGELLFKRNILDLVKSFPGKITCSFHVTQQSSPVCVELQPFITEGRITEKDLASYVSTDQLCYICGPPPMIESTCKQLESLHVPKEQILFEKWW.

A signal peptide spans 1-18 (MALVAGSAAYQVLRGVTG). The 104-residue stretch at 63 to 166 (EIISPAKVCE…VGGEFCFDPQ (104 aa)) folds into the FAD-binding FR-type domain. 180–185 (GVGINP) contributes to the NAD(+) binding site.

This is Oxidoreductase NAD-binding domain-containing protein 1 (oxnad1) from Xenopus tropicalis (Western clawed frog).